Consider the following 85-residue polypeptide: MLAGMPSLSHEEQQEAVERIHKFMSEGMSSGEAIALVAAEIRERHQNDPQAMAIFEDHDFDEHTESDYRRDDEPDADDIEDPYEG.

Positions 50 to 85 (QAMAIFEDHDFDEHTESDYRRDDEPDADDIEDPYEG) are disordered. The span at 55–72 (FEDHDFDEHTESDYRRDD) shows a compositional bias: basic and acidic residues. Over residues 73-85 (EPDADDIEDPYEG) the composition is skewed to acidic residues.

This sequence belongs to the UPF0181 family.

The protein is UPF0181 protein YPO1774/y2534/YP_1619 of Yersinia pestis.